The primary structure comprises 306 residues: GTP cyclohydrolase FolE2 (306 aa).

This sequence belongs to the GTP cyclohydrolase IV family.

The enzyme catalyses GTP + H2O = 7,8-dihydroneopterin 3'-triphosphate + formate + H(+). Its pathway is cofactor biosynthesis; 7,8-dihydroneopterin triphosphate biosynthesis; 7,8-dihydroneopterin triphosphate from GTP: step 1/1. Its function is as follows. Converts GTP to 7,8-dihydroneopterin triphosphate. The polypeptide is GTP cyclohydrolase FolE2 (Xanthomonas oryzae pv. oryzae (strain MAFF 311018)).